Reading from the N-terminus, the 457-residue chain is 1-carboxybiuret hydrolase subunit AtzE (457 aa).

Catalysis depends on charge relay system residues K74 and S150. S174 serves as the catalytic Acyl-ester intermediate.

This sequence belongs to the amidase family. In terms of assembly, heterotetramer consisting of 2 AtzE and 2 AtzG subunits.

It catalyses the reaction 1-carboxybiuret + H2O = urea-1,3-dicarboxylate + NH4(+). It functions in the pathway xenobiotic degradation; atrazine degradation. Its function is as follows. Hydrolyzes 1-carboxybiuret to urea-1,3-dicarboxylate and NH(3). The sequence is that of 1-carboxybiuret hydrolase subunit AtzE from Pseudomonas sp. (strain ADP).